The chain runs to 393 residues: S-adenosylmethionine synthase (393 aa).

Glutamate 10 is a binding site for Mg(2+). Histidine 16 provides a ligand contact to ATP. Glutamate 44 contributes to the K(+) binding site. L-methionine-binding residues include glutamate 57 and glutamine 100. Residues 168–170 (DGK), 236–239 (SGRF), aspartate 247, 253–254 (RK), alanine 270, lysine 274, and lysine 278 contribute to the ATP site. Residue aspartate 247 coordinates L-methionine. Lysine 278 serves as a coordination point for L-methionine.

This sequence belongs to the AdoMet synthase family. Homotetramer. Mn(2+) is required as a cofactor. Requires Mg(2+) as cofactor. The cofactor is Co(2+). K(+) serves as cofactor.

The protein resides in the cytoplasm. It carries out the reaction L-methionine + ATP + H2O = S-adenosyl-L-methionine + phosphate + diphosphate. The protein operates within amino-acid biosynthesis; S-adenosyl-L-methionine biosynthesis; S-adenosyl-L-methionine from L-methionine: step 1/1. In terms of biological role, catalyzes the formation of S-adenosylmethionine from methionine and ATP. The reaction comprises two steps that are both catalyzed by the same enzyme: formation of S-adenosylmethionine (AdoMet) and triphosphate, and subsequent hydrolysis of the triphosphate. The polypeptide is S-adenosylmethionine synthase (METK) (Musa acuminata (Banana)).